The sequence spans 337 residues: Mycothiol acetyltransferase (337 aa).

N-acetyltransferase domains are found at residues leucine 11–proline 151 and valine 154–lysine 337. Position 37 (glutamate 37) interacts with 1D-myo-inositol 2-(L-cysteinylamino)-2-deoxy-alpha-D-glucopyranoside. Residue leucine 81–isoleucine 83 coordinates acetyl-CoA. 1D-myo-inositol 2-(L-cysteinylamino)-2-deoxy-alpha-D-glucopyranoside is bound at residue glutamate 182. Residues arginine 210–aspartate 246 form a disordered region. A compositionally biased stretch (low complexity) spans aspartate 221–serine 234. The segment covering alanine 235–aspartate 246 has biased composition (gly residues). Residues lysine 257 and glutamate 271 each contribute to the 1D-myo-inositol 2-(L-cysteinylamino)-2-deoxy-alpha-D-glucopyranoside site. Residues valine 275–valine 277 and glutamine 282–arginine 288 contribute to the acetyl-CoA site. Tyrosine 309 contributes to the 1D-myo-inositol 2-(L-cysteinylamino)-2-deoxy-alpha-D-glucopyranoside binding site. Asparagine 314 to arginine 319 serves as a coordination point for acetyl-CoA.

This sequence belongs to the acetyltransferase family. MshD subfamily. Monomer.

It carries out the reaction 1D-myo-inositol 2-(L-cysteinylamino)-2-deoxy-alpha-D-glucopyranoside + acetyl-CoA = mycothiol + CoA + H(+). In terms of biological role, catalyzes the transfer of acetyl from acetyl-CoA to desacetylmycothiol (Cys-GlcN-Ins) to form mycothiol. The protein is Mycothiol acetyltransferase of Streptosporangium roseum (strain ATCC 12428 / DSM 43021 / JCM 3005 / KCTC 9067 / NCIMB 10171 / NRRL 2505 / NI 9100).